The sequence spans 551 residues: DNA double-strand break repair helicase HerA (551 aa).

Residues Arg-152, 161–166, and 507–508 contribute to the ATP site; these read GAGKSN and RI.

It belongs to the HerA family. As to quaternary structure, homohexamer. Interacts with NurA.

It catalyses the reaction Couples ATP hydrolysis with the unwinding of duplex DNA at the replication fork by translocating in the 5'-3' direction. This creates two antiparallel DNA single strands (ssDNA). The leading ssDNA polymer is the template for DNA polymerase III holoenzyme which synthesizes a continuous strand.. It carries out the reaction ATP + H2O = ADP + phosphate + H(+). The catalysed reaction is Couples ATP hydrolysis with the unwinding of duplex DNA by translocating in the 3'-5' direction.. Helicase activity is stimulated in the presence of NurA. Its function is as follows. Involved in DNA double-strand break (DSB) repair. Probably acts with NurA to stimulate resection of the 5' strand and produce the long 3' single-strand that is required for RadA loading. Has DNA-dependent ATPase activity and DNA helicase activity. The sequence is that of DNA double-strand break repair helicase HerA from Pyrococcus furiosus (strain ATCC 43587 / DSM 3638 / JCM 8422 / Vc1).